The chain runs to 504 residues: L-carnitine/gamma-butyrobetaine antiporter (504 aa).

Helical transmembrane passes span 10 to 30, 51 to 71, 92 to 112, 143 to 163, 195 to 215, 231 to 251, 263 to 283, 316 to 336, 347 to 367, 398 to 418, 446 to 466, and 475 to 495; these read IEPKVFFPPLIIVGILCWLTV, WGWAFEWYMVVMLFGWFWLVF, IFMMFASCTSAAVLFWGSIEI, GPLPWATYSFLSVAFAYFFFV, FYLVALIFAMGTSLGLATPLV, LDAIIITCWIILNAICVACGL, SYLSFLMLGWVFIVSGASFIM, WTVFYWAWWVIYAIQMSIFLA, LCFGMVLGLTASTWILWTVLG, WAALPLSTATIWGFFILCFIA, LLVRIGWSILVGIIGIVLLAL, and AIIAGGCPLFFVNIMVTLSFI.

Belongs to the BCCT transporter (TC 2.A.15) family. CaiT subfamily. In terms of assembly, homotrimer.

It localises to the cell inner membrane. The catalysed reaction is 4-(trimethylamino)butanoate(in) + (R)-carnitine(out) = 4-(trimethylamino)butanoate(out) + (R)-carnitine(in). The protein operates within amine and polyamine metabolism; carnitine metabolism. Catalyzes the exchange of L-carnitine for gamma-butyrobetaine. The protein is L-carnitine/gamma-butyrobetaine antiporter of Escherichia coli O8 (strain IAI1).